We begin with the raw amino-acid sequence, 149 residues long: Epoxide hydrolase EphG (149 aa).

The Proton donor role is filled by aspartate 93. Residue aspartate 122 is the Proton acceptor of the active site.

Belongs to the limonene-1,2-epoxide hydrolase family. Homodimer. Is also present as monomer in solution.

The catalysed reaction is an epoxide + H2O = an ethanediol. It catalyses the reaction 5,6alpha-epoxy-5alpha-cholestan-3beta-ol + H2O = 5alpha-cholestane-3beta,5,6beta-triol. The enzyme catalyses 5,6beta-epoxy-5beta-cholestan-3beta-ol + H2O = 5alpha-cholestane-3beta,5,6beta-triol. With respect to regulation, is inhibited by the anti-epileptic drug valpromide (Ki value of about 100 uM). Functionally, epoxide hydrolase capable of hydrolyzing long or bulky lipophilic epoxides such as 9,10-epoxystearic acid and cholesterol 5,6-oxide in vitro. The physiological substrates have yet to be identified, but could be fatty acid or steroid derivatives. In Mycobacterium tuberculosis (strain ATCC 25618 / H37Rv), this protein is Epoxide hydrolase EphG (ephG).